The primary structure comprises 607 residues: Runt-related transcription factor 2 (607 aa).

The interval 1–88 is interaction with IFI204; the sequence is MLHSPHKQPQ…TMASNSLFSA (88 aa). Residues 100–112 are compositionally biased toward low complexity; that stretch reads PSTSRRFSPPSSS. Residues 100 to 126 form a disordered region; that stretch reads PSTSRRFSPPSSSLQPGKMSDVSPVVA. Positions 187-315 constitute a Runt domain; the sequence is TMVEIIADHP…TVDGPREPRR (129 aa). A required for interaction with FOXO1 region spans residues 242–258; the sequence is VMAGNDENYSAELRNAS. The tract at residues 307–430 is disordered; that stretch reads VDGPREPRRH…VPRRISDDDT (124 aa). A Glycyl lysine isopeptide (Lys-Gly) (interchain with G-Cter in SUMO2) cross-link involves residue K324. Residue R353 is modified to Asymmetric dimethylarginine. A compositionally biased stretch (polar residues) spans 353 to 412; it reads RPSLNSAPSPFNPQGQSQITDPRQAQSSPPWSYDQSYPSYLSQMTSPSIHSTTPLSSTRG. Residues 422–525 form an interaction with KAT6A region; it reads PRRISDDDTA…SQSQSGPFQT (104 aa). The segment at 460 to 554 is interaction with KAT6B; the sequence is RQFPSISSLT…VPGGDRSPSR (95 aa). S537 is modified (phosphoserine; by CDK1). The tract at residues 548-607 is disordered; sequence GDRSPSRMVPPCTTTSNGSTLLNPNLPNQNDGVDADGSHSSSPTVLNSSGRMDESVWRPY. Polar residues-rich tracts occupy residues 559–578 and 585–597; these read CTTT…NQND and SHSS…NSSG. Positions 598-607 are enriched in basic and acidic residues; the sequence is RMDESVWRPY.

Heterodimer of an alpha and a beta subunit. The alpha subunit binds DNA as a monomer and through the Runt domain. DNA-binding is increased by heterodimerization. Interacts with XRCC6 (Ku70) and XRCC5 (Ku80). Interacts with CCNB1, KAT6A and KAT6B. Interacts with HIVEP3. Interacts with IFI204. Interaction with SATB2; the interaction results in enhanced DNA binding and transactivation by these transcription factors. Binds to HIPK3. Interacts with FOXO1 (via a C-terminal region); the interaction inhibits RUNX2 transcriptional activity towards BGLAP. Interacts with FOXP3. Interacts with TMEM119. Interacts with OLFM2. Interacts with IPO7; the interaction inhibits RUNX2 nuclear translocation in osteoblasts. In terms of assembly, interacts with DDX5. In terms of processing, phosphorylated; probably by MAP kinases (MAPK). Phosphorylation by HIPK3 is required for the SPEN/MINT and FGF2 transactivation during osteoblastic differentiation. Phosphorylation at Ser-537 by CDK1 promotes endothelial cell proliferation required for tumor angiogenesis probably by facilitating cell cycle progression. Found in thymus and testis, T-cell lines but not in B-cell lines. Isoform 2 is exclusively found in bone, particularly in osteoblasts; isoforms 3 and 4 are expressed in T-cell lines; isoforms 5, 6, 7, 8 and 9 can be found in osteoblasts and osteosarcoma cell lines.

It is found in the nucleus. Its subcellular location is the cytoplasm. Its function is as follows. Transcription factor involved in osteoblastic differentiation and skeletal morphogenesis. Essential for the maturation of osteoblasts and both intramembranous and endochondral ossification. CBF binds to the core site, 5'-PYGPYGGT-3', of a number of enhancers and promoters, including murine leukemia virus, polyomavirus enhancer, T-cell receptor enhancers, osteocalcin, osteopontin, bone sialoprotein, alpha 1(I) collagen, LCK, IL-3 and GM-CSF promoters. Inhibits KAT6B-dependent transcriptional activation. In osteoblasts, supports transcription activation: synergizes with SPEN/MINT to enhance FGFR2-mediated activation of the osteocalcin FGF-responsive element (OCFRE). This Mus musculus (Mouse) protein is Runt-related transcription factor 2 (Runx2).